Reading from the N-terminus, the 452-residue chain is 3-phosphoshikimate 1-carboxyvinyltransferase (452 aa).

The 3-phosphoshikimate site is built by K24, S25, and R29. K24 lines the phosphoenolpyruvate pocket. Phosphoenolpyruvate-binding residues include G95 and R123. The 3-phosphoshikimate site is built by S167, Q169, D319, and K346. Residue Q169 coordinates phosphoenolpyruvate. D319 serves as the catalytic Proton acceptor. Residues R350 and R394 each coordinate phosphoenolpyruvate.

This sequence belongs to the EPSP synthase family. Monomer.

It is found in the cytoplasm. The catalysed reaction is 3-phosphoshikimate + phosphoenolpyruvate = 5-O-(1-carboxyvinyl)-3-phosphoshikimate + phosphate. It participates in metabolic intermediate biosynthesis; chorismate biosynthesis; chorismate from D-erythrose 4-phosphate and phosphoenolpyruvate: step 6/7. Its function is as follows. Catalyzes the transfer of the enolpyruvyl moiety of phosphoenolpyruvate (PEP) to the 5-hydroxyl of shikimate-3-phosphate (S3P) to produce enolpyruvyl shikimate-3-phosphate and inorganic phosphate. The sequence is that of 3-phosphoshikimate 1-carboxyvinyltransferase from Phenylobacterium zucineum (strain HLK1).